The chain runs to 156 residues: Probable chemoreceptor glutamine deamidase CheD (156 aa).

Belongs to the CheD family.

The catalysed reaction is L-glutaminyl-[protein] + H2O = L-glutamyl-[protein] + NH4(+). Its function is as follows. Probably deamidates glutamine residues to glutamate on methyl-accepting chemotaxis receptors (MCPs), playing an important role in chemotaxis. The protein is Probable chemoreceptor glutamine deamidase CheD of Bdellovibrio bacteriovorus (strain ATCC 15356 / DSM 50701 / NCIMB 9529 / HD100).